The chain runs to 417 residues: Multifunctional CCA protein (417 aa).

ATP contacts are provided by glycine 8 and arginine 11. CTP contacts are provided by glycine 8 and arginine 11. Mg(2+) is bound by residues aspartate 21 and aspartate 23. ATP is bound by residues arginine 91, arginine 143, and arginine 146. Arginine 91, arginine 143, and arginine 146 together coordinate CTP. In terms of domain architecture, HD spans 232-333 (TGVHVMMVVD…VRLFERSDAL (102 aa)).

It belongs to the tRNA nucleotidyltransferase/poly(A) polymerase family. Bacterial CCA-adding enzyme type 1 subfamily. As to quaternary structure, monomer. Can also form homodimers and oligomers. The cofactor is Mg(2+). Ni(2+) serves as cofactor.

It catalyses the reaction a tRNA precursor + 2 CTP + ATP = a tRNA with a 3' CCA end + 3 diphosphate. It carries out the reaction a tRNA with a 3' CCA end + 2 CTP + ATP = a tRNA with a 3' CCACCA end + 3 diphosphate. In terms of biological role, catalyzes the addition and repair of the essential 3'-terminal CCA sequence in tRNAs without using a nucleic acid template. Adds these three nucleotides in the order of C, C, and A to the tRNA nucleotide-73, using CTP and ATP as substrates and producing inorganic pyrophosphate. tRNA 3'-terminal CCA addition is required both for tRNA processing and repair. Also involved in tRNA surveillance by mediating tandem CCA addition to generate a CCACCA at the 3' terminus of unstable tRNAs. While stable tRNAs receive only 3'-terminal CCA, unstable tRNAs are marked with CCACCA and rapidly degraded. The polypeptide is Multifunctional CCA protein (Paraburkholderia phymatum (strain DSM 17167 / CIP 108236 / LMG 21445 / STM815) (Burkholderia phymatum)).